Here is a 176-residue protein sequence, read N- to C-terminus: Large ribosomal subunit protein bL17m (176 aa).

The N-terminal 8 residues, 1 to 8 (MRLSLAAA), are a transit peptide targeting the mitochondrion.

This sequence belongs to the bacterial ribosomal protein bL17 family. As to quaternary structure, component of the mitochondrial ribosome large subunit (39S) which comprises a 16S rRNA and about 50 distinct proteins.

It is found in the mitochondrion. In Rattus norvegicus (Rat), this protein is Large ribosomal subunit protein bL17m (Mrpl17).